Consider the following 41-residue polypeptide: Maticotoxin A (41 aa).

Intrachain disulfides connect Cys-3–Cys-22 and Cys-15–Cys-39.

The protein belongs to the three-finger toxin family. Short-chain subfamily. Expressed by the venom gland.

It localises to the secreted. The sequence is that of Maticotoxin A from Calliophis bivirgatus (Blue Malaysian coral snake).